Reading from the N-terminus, the 281-residue chain is Small ribosomal subunit protein uS2 (281 aa).

The segment at 229-281 (RSGANKTEGEAAEQPMAAWEKELLTNEAPAEASAEAAAPAAAEGETAEAPKAE) is disordered. A compositionally biased stretch (low complexity) spans 255-275 (EAPAEASAEAAAPAAAEGETA).

It belongs to the universal ribosomal protein uS2 family.

The protein is Small ribosomal subunit protein uS2 of Bifidobacterium longum subsp. infantis (strain ATCC 15697 / DSM 20088 / JCM 1222 / NCTC 11817 / S12).